The primary structure comprises 158 residues: Low molecular weight phosphotyrosine protein phosphatase (158 aa).

Ala-2 bears the N-acetylalanine mark. Cys-13 (nucleophile) is an active-site residue. The active site involves Arg-19. Catalysis depends on Asp-130, which acts as the Proton donor. 2 positions are modified to phosphotyrosine: Tyr-132 and Tyr-133.

This sequence belongs to the low molecular weight phosphotyrosine protein phosphatase family. In terms of assembly, interacts with EPHA2; dephosphorylates EPHA2. Interacts with EPHB1. Interacts with the SH3 domain of SPTAN1. There is no interaction observed for isoform 2. Post-translationally, phosphorylated by LCK. Phosphorylation at Tyr-132 increases its phosphatase activity. Widely expressed with highest levels in brain and liver and lowest levels in muscle.

It is found in the cytoplasm. It catalyses the reaction O-phospho-L-tyrosyl-[protein] + H2O = L-tyrosyl-[protein] + phosphate. The enzyme catalyses a phosphate monoester + H2O = an alcohol + phosphate. With respect to regulation, inhibited by sulfhydryl reagents. Its function is as follows. Acts on tyrosine phosphorylated proteins, low-MW aryl phosphates and natural and synthetic acyl phosphates with differences in substrate specificity between isoform 1 and isoform 2. The chain is Low molecular weight phosphotyrosine protein phosphatase from Mus musculus (Mouse).